The primary structure comprises 415 residues: WD repeat and FYVE domain-containing protein 2 (415 aa).

WD repeat units follow at residues 71–103, 119–148, 202–232, and 245–284; these read HHFM…YEFS, CHAG…IVWH, AHTN…IMWD, and GHNG…VETP. The FYVE-type zinc-finger motif lies at 286–357; that stretch reads WKTSDCCQKC…ICNDCNARMK (72 aa). The Zn(2+) site is built by Cys292, Cys295, Cys319, Cys322, Cys327, Cys330, Cys349, and Cys352. One copy of the WD 5 repeat lies at 373–403; that stretch reads EIHTGITAMHLQETLGLLVTSGQNRVIMIWD.

In terms of biological role, plays a role in coelomocyte endocytosis. The polypeptide is WD repeat and FYVE domain-containing protein 2 (wdfy-2) (Caenorhabditis elegans).